A 507-amino-acid polypeptide reads, in one-letter code: Glycerol kinase (507 aa).

T12 is an ADP binding site. The ATP site is built by T12, T13, and S14. T12 contributes to the sn-glycerol 3-phosphate binding site. An ADP-binding site is contributed by R16. Positions 82, 83, 134, and 250 each coordinate sn-glycerol 3-phosphate. Residues R82, E83, Y134, D250, and Q251 each coordinate glycerol. Residues T272 and G316 each coordinate ADP. Residues T272, G316, Q320, and G417 each contribute to the ATP site. Residues G417 and N421 each coordinate ADP.

This sequence belongs to the FGGY kinase family.

It carries out the reaction glycerol + ATP = sn-glycerol 3-phosphate + ADP + H(+). It functions in the pathway polyol metabolism; glycerol degradation via glycerol kinase pathway; sn-glycerol 3-phosphate from glycerol: step 1/1. With respect to regulation, inhibited by fructose 1,6-bisphosphate (FBP). Key enzyme in the regulation of glycerol uptake and metabolism. Catalyzes the phosphorylation of glycerol to yield sn-glycerol 3-phosphate. This Beijerinckia indica subsp. indica (strain ATCC 9039 / DSM 1715 / NCIMB 8712) protein is Glycerol kinase.